The sequence spans 538 residues: Carboxypeptidase 2 (538 aa).

The signal sequence occupies residues 1 to 21 (MVAYRFLTLISLGLGSHCASA). N-linked (GlcNAc...) asparagine glycosylation is present at Asn46. The interval 53–76 (PAFTSPGTVPRGFSDGTSGPTRDE) is disordered. The 281-residue stretch at 71–351 (GPTRDETMEG…VMVKSILQTA (281 aa)) folds into the Peptidase M14 domain. Residues His136, Glu139, and His224 each coordinate Zn(2+). Glu322 (proton donor/acceptor) is an active-site residue. N-linked (GlcNAc...) asparagine glycosylation is found at Asn393 and Asn459.

The protein belongs to the peptidase M14 family. Zn(2+) is required as a cofactor.

The protein resides in the secreted. Functionally, extracellular metalloprotease that contributes to pathogenicity. This Trichophyton equinum (Horse ringworm fungus) protein is Carboxypeptidase 2 (MCPB).